The sequence spans 161 residues: Transcriptional repressor NrdR (161 aa).

The segment at 3-34 (CPFCGKYDTKVTDSRLVAEGDQVRRRRQCNDC) is a zinc-finger region. Residues 49–139 (PRVIKGDGSR…VYRRFQDLDE (91 aa)) form the ATP-cone domain.

This sequence belongs to the NrdR family. It depends on Zn(2+) as a cofactor.

Functionally, negatively regulates transcription of bacterial ribonucleotide reductase nrd genes and operons by binding to NrdR-boxes. The protein is Transcriptional repressor NrdR of Chromohalobacter salexigens (strain ATCC BAA-138 / DSM 3043 / CIP 106854 / NCIMB 13768 / 1H11).